The following is a 499-amino-acid chain: Maturase K (499 aa).

The protein belongs to the intron maturase 2 family. MatK subfamily.

It is found in the plastid. The protein localises to the chloroplast. Its function is as follows. Usually encoded in the trnK tRNA gene intron. Probably assists in splicing its own and other chloroplast group II introns. This chain is Maturase K, found in Gymnocladus dioicus (Kentucky coffee tree).